We begin with the raw amino-acid sequence, 505 residues long: Poxin-Schlafen (505 aa).

The interval 1-238 is poxin-like; it reads MAMFYAHAFG…SKEERVDYVL (238 aa). The Proton donor role is filled by His17. Residue Tyr138 is the Shared with catalytic histidine of dimeric partner of the active site. Lys142 acts as the Proton acceptor; shared with catalytic histidine of dimeric partner in catalysis. Residues 239–505 form a schlafen-like region; that stretch reads MKRLESIRHL…PDEWVSHIKF (267 aa).

It in the N-terminal section; belongs to the poxin family. In the C-terminal section; belongs to the Schlafen protein family. Subgroup poxviridae B3 subfamily. As to quaternary structure, homodimer.

It carries out the reaction 2',3'-cGAMP + H2O = Gp(2'-5')Ap(3') + H(+). In terms of biological role, nuclease that is responsible for viral evasion of host cGAS-STING innate immunity. Cleaves 2',3'-cGAMP which is produced by host cGAS following recognition of cytosolic DNA and blocks the subsequent 2',3'-cGAMP-mediated activation of TMEM173/STING, which normally spreads to adjacent cells and activates the interferon and NF-kappa-B immune responses. In Bos taurus (Bovine), this protein is Poxin-Schlafen (OPG188).